A 935-amino-acid polypeptide reads, in one-letter code: 2-oxoglutarate dehydrogenase E1 component (935 aa).

Belongs to the alpha-ketoglutarate dehydrogenase family. In terms of assembly, homodimer. Part of the 2-oxoglutarate dehydrogenase (OGDH) complex composed of E1 (2-oxoglutarate dehydrogenase), E2 (dihydrolipoamide succinyltransferase) and E3 (dihydrolipoamide dehydrogenase); the complex contains multiple copies of the three enzymatic components (E1, E2 and E3). The cofactor is thiamine diphosphate.

The enzyme catalyses N(6)-[(R)-lipoyl]-L-lysyl-[protein] + 2-oxoglutarate + H(+) = N(6)-[(R)-S(8)-succinyldihydrolipoyl]-L-lysyl-[protein] + CO2. E1 component of the 2-oxoglutarate dehydrogenase (OGDH) complex which catalyzes the decarboxylation of 2-oxoglutarate, the first step in the conversion of 2-oxoglutarate to succinyl-CoA and CO(2). This is 2-oxoglutarate dehydrogenase E1 component (sucA) from Haemophilus influenzae (strain ATCC 51907 / DSM 11121 / KW20 / Rd).